Reading from the N-terminus, the 631-residue chain is Phosphomethylpyrimidine synthase (631 aa).

Substrate contacts are provided by residues asparagine 239, methionine 268, tyrosine 297, histidine 333, 353-355 (SRG), 394-397 (DGLR), and glutamate 433. A Zn(2+)-binding site is contributed by histidine 437. Tyrosine 460 provides a ligand contact to substrate. Histidine 501 provides a ligand contact to Zn(2+). [4Fe-4S] cluster-binding residues include cysteine 581, cysteine 584, and cysteine 589.

The protein belongs to the ThiC family. As to quaternary structure, homodimer. It depends on [4Fe-4S] cluster as a cofactor.

The catalysed reaction is 5-amino-1-(5-phospho-beta-D-ribosyl)imidazole + S-adenosyl-L-methionine = 4-amino-2-methyl-5-(phosphooxymethyl)pyrimidine + CO + 5'-deoxyadenosine + formate + L-methionine + 3 H(+). It functions in the pathway cofactor biosynthesis; thiamine diphosphate biosynthesis. Catalyzes the synthesis of the hydroxymethylpyrimidine phosphate (HMP-P) moiety of thiamine from aminoimidazole ribotide (AIR) in a radical S-adenosyl-L-methionine (SAM)-dependent reaction. This Escherichia coli O6:K15:H31 (strain 536 / UPEC) protein is Phosphomethylpyrimidine synthase.